The primary structure comprises 130 residues: Small ribosomal subunit protein uS8A (130 aa).

It belongs to the universal ribosomal protein uS8 family. As to quaternary structure, component of the small ribosomal subunit (SSU). Mature yeast ribosomes consist of a small (40S) and a large (60S) subunit. The 40S small subunit contains 1 molecule of ribosomal RNA (18S rRNA) and 33 different proteins (encoded by 57 genes). The large 60S subunit contains 3 rRNA molecules (25S, 5.8S and 5S rRNA) and 46 different proteins (encoded by 81 genes).

Its subcellular location is the cytoplasm. Component of the ribosome, a large ribonucleoprotein complex responsible for the synthesis of proteins in the cell. The small ribosomal subunit (SSU) binds messenger RNAs (mRNAs) and translates the encoded message by selecting cognate aminoacyl-transfer RNA (tRNA) molecules. The large subunit (LSU) contains the ribosomal catalytic site termed the peptidyl transferase center (PTC), which catalyzes the formation of peptide bonds, thereby polymerizing the amino acids delivered by tRNAs into a polypeptide chain. The nascent polypeptides leave the ribosome through a tunnel in the LSU and interact with protein factors that function in enzymatic processing, targeting, and the membrane insertion of nascent chains at the exit of the ribosomal tunnel. The protein is Small ribosomal subunit protein uS8A of Saccharomyces cerevisiae (strain ATCC 204508 / S288c) (Baker's yeast).